Reading from the N-terminus, the 232-residue chain is 5'-methylthioadenosine/S-adenosylhomocysteine nucleosidase (232 aa).

The Proton acceptor role is filled by Glu12. Substrate is bound by residues Gly78, Ile152, and 173-174; that span reads ME. The Proton donor role is filled by Asp197.

It belongs to the PNP/UDP phosphorylase family. MtnN subfamily. As to quaternary structure, homodimer.

The catalysed reaction is S-adenosyl-L-homocysteine + H2O = S-(5-deoxy-D-ribos-5-yl)-L-homocysteine + adenine. It catalyses the reaction S-methyl-5'-thioadenosine + H2O = 5-(methylsulfanyl)-D-ribose + adenine. It carries out the reaction 5'-deoxyadenosine + H2O = 5-deoxy-D-ribose + adenine. Its pathway is amino-acid biosynthesis; L-methionine biosynthesis via salvage pathway; S-methyl-5-thio-alpha-D-ribose 1-phosphate from S-methyl-5'-thioadenosine (hydrolase route): step 1/2. Catalyzes the irreversible cleavage of the glycosidic bond in both 5'-methylthioadenosine (MTA) and S-adenosylhomocysteine (SAH/AdoHcy) to adenine and the corresponding thioribose, 5'-methylthioribose and S-ribosylhomocysteine, respectively. Also cleaves 5'-deoxyadenosine, a toxic by-product of radical S-adenosylmethionine (SAM) enzymes, into 5-deoxyribose and adenine. Thus, is required for in vivo function of the radical SAM enzymes biotin synthase and lipoic acid synthase, that are inhibited by 5'-deoxyadenosine accumulation. The chain is 5'-methylthioadenosine/S-adenosylhomocysteine nucleosidase from Salmonella paratyphi A (strain ATCC 9150 / SARB42).